The primary structure comprises 97 residues: ORF9b protein (97 aa).

Positions Met-8 to Lys-97 constitute a 9b domain. The short motif at Ile-45–Ser-53 is the Nuclear export signal element.

The protein belongs to the coronavirus group 2 protein 9b family. As to quaternary structure, homodimer. Interacts with host TOMM70; the interaction occurs only with monomer.

It localises to the host cytoplasm. The protein localises to the host mitochondrion. In terms of biological role, plays a role in inhibiting the host innate immune response by targeting the mitochondrial-associated innate immune response. Acts by binding to host TOMM70, inhibiting its binding to HSP90AB1 thereby disrupting the interferon activation pathway. The protein is ORF9b protein of Homo sapiens (Human).